Reading from the N-terminus, the 213-residue chain is Large ribosomal subunit protein uL3 (213 aa).

Q151 is subject to N5-methylglutamine.

The protein belongs to the universal ribosomal protein uL3 family. In terms of assembly, part of the 50S ribosomal subunit. Forms a cluster with proteins L14 and L19. In terms of processing, methylated by PrmB.

One of the primary rRNA binding proteins, it binds directly near the 3'-end of the 23S rRNA, where it nucleates assembly of the 50S subunit. In Rhizobium leguminosarum bv. trifolii (strain WSM2304), this protein is Large ribosomal subunit protein uL3.